The following is a 131-amino-acid chain: Large ribosomal subunit protein bL19 (131 aa).

It belongs to the bacterial ribosomal protein bL19 family.

Functionally, this protein is located at the 30S-50S ribosomal subunit interface and may play a role in the structure and function of the aminoacyl-tRNA binding site. The polypeptide is Large ribosomal subunit protein bL19 (Rhodopseudomonas palustris (strain BisA53)).